The following is a 344-amino-acid chain: tRNA N6-adenosine threonylcarbamoyltransferase (344 aa).

Residues H111 and H115 each coordinate Fe cation. Substrate is bound by residues 133-137 (VVSGG), D166, G179, D183, and N270. Position 298 (D298) interacts with Fe cation.

The protein belongs to the KAE1 / TsaD family. Fe(2+) is required as a cofactor.

It localises to the cytoplasm. The enzyme catalyses L-threonylcarbamoyladenylate + adenosine(37) in tRNA = N(6)-L-threonylcarbamoyladenosine(37) in tRNA + AMP + H(+). Functionally, required for the formation of a threonylcarbamoyl group on adenosine at position 37 (t(6)A37) in tRNAs that read codons beginning with adenine. Is involved in the transfer of the threonylcarbamoyl moiety of threonylcarbamoyl-AMP (TC-AMP) to the N6 group of A37, together with TsaE and TsaB. TsaD likely plays a direct catalytic role in this reaction. The polypeptide is tRNA N6-adenosine threonylcarbamoyltransferase (Persephonella marina (strain DSM 14350 / EX-H1)).